Reading from the N-terminus, the 151-residue chain is D-aminoacyl-tRNA deacylase (151 aa).

Positions 139 to 140 (GP) match the Gly-cisPro motif, important for rejection of L-amino acids motif.

It belongs to the DTD family. Homodimer.

It is found in the cytoplasm. It carries out the reaction glycyl-tRNA(Ala) + H2O = tRNA(Ala) + glycine + H(+). The catalysed reaction is a D-aminoacyl-tRNA + H2O = a tRNA + a D-alpha-amino acid + H(+). An aminoacyl-tRNA editing enzyme that deacylates mischarged D-aminoacyl-tRNAs. Also deacylates mischarged glycyl-tRNA(Ala), protecting cells against glycine mischarging by AlaRS. Acts via tRNA-based rather than protein-based catalysis; rejects L-amino acids rather than detecting D-amino acids in the active site. By recycling D-aminoacyl-tRNA to D-amino acids and free tRNA molecules, this enzyme counteracts the toxicity associated with the formation of D-aminoacyl-tRNA entities in vivo and helps enforce protein L-homochirality. The sequence is that of D-aminoacyl-tRNA deacylase from Symbiobacterium thermophilum (strain DSM 24528 / JCM 14929 / IAM 14863 / T).